The primary structure comprises 479 residues: Citrate synthase, mitochondrial (479 aa).

The transit peptide at 1–37 (MSAILSTTSKSFLSRGSTRQCQNMQKALFALLNARHY) directs the protein to the mitochondrion. Catalysis depends on residues H312, H358, and D413. S462 carries the phosphoserine modification.

The protein belongs to the citrate synthase family. Monomer and homodimer. Exists as an inactive monomer when phosphorylated. Homodimerization is dependent on dephosphorylation of Ser-462 by PTC7 and is required for activity. Post-translationally, phosphorylation at Ser-462. Dephosphorylated at Ser-462 by PTC7.

It localises to the mitochondrion matrix. It carries out the reaction oxaloacetate + acetyl-CoA + H2O = citrate + CoA + H(+). The protein operates within carbohydrate metabolism; tricarboxylic acid cycle; isocitrate from oxaloacetate: step 1/2. Its activity is regulated as follows. Phosphorylation at Ser-462 inhibits catalytic activity. Dephosphorylation at Ser-462 by PTC7 enhances catalytic activity. In terms of biological role, specific citrate synthase with catalytic activity only with acetyl-CoA. The sequence is that of Citrate synthase, mitochondrial from Saccharomyces cerevisiae (strain ATCC 204508 / S288c) (Baker's yeast).